The sequence spans 284 residues: Phosphatidylglycerol--prolipoprotein diacylglyceryl transferase (284 aa).

7 consecutive transmembrane segments (helical) span residues I14 to I34, Y62 to Y82, F106 to Y126, L136 to I156, P190 to A210, G218 to Y238, and L252 to Y272. R155 lines the a 1,2-diacyl-sn-glycero-3-phospho-(1'-sn-glycerol) pocket.

The protein belongs to the Lgt family.

The protein resides in the cell inner membrane. It carries out the reaction L-cysteinyl-[prolipoprotein] + a 1,2-diacyl-sn-glycero-3-phospho-(1'-sn-glycerol) = an S-1,2-diacyl-sn-glyceryl-L-cysteinyl-[prolipoprotein] + sn-glycerol 1-phosphate + H(+). It participates in protein modification; lipoprotein biosynthesis (diacylglyceryl transfer). In terms of biological role, catalyzes the transfer of the diacylglyceryl group from phosphatidylglycerol to the sulfhydryl group of the N-terminal cysteine of a prolipoprotein, the first step in the formation of mature lipoproteins. The polypeptide is Phosphatidylglycerol--prolipoprotein diacylglyceryl transferase (Helicobacter pylori (strain ATCC 700392 / 26695) (Campylobacter pylori)).